The sequence spans 294 residues: 33 kDa chaperonin (294 aa).

Disulfide bonds link Cys238/Cys240 and Cys271/Cys274.

This sequence belongs to the HSP33 family. Under oxidizing conditions two disulfide bonds are formed involving the reactive cysteines. Under reducing conditions zinc is bound to the reactive cysteines and the protein is inactive.

The protein localises to the cytoplasm. In terms of biological role, redox regulated molecular chaperone. Protects both thermally unfolding and oxidatively damaged proteins from irreversible aggregation. Plays an important role in the bacterial defense system toward oxidative stress. This is 33 kDa chaperonin from Thermoanaerobacter pseudethanolicus (strain ATCC 33223 / 39E) (Clostridium thermohydrosulfuricum).